Here is a 286-residue protein sequence, read N- to C-terminus: Bifunctional protein FolD (286 aa).

NADP(+) is bound by residues 165-167 (GRS) and S190.

It belongs to the tetrahydrofolate dehydrogenase/cyclohydrolase family. Homodimer.

It catalyses the reaction (6R)-5,10-methylene-5,6,7,8-tetrahydrofolate + NADP(+) = (6R)-5,10-methenyltetrahydrofolate + NADPH. The catalysed reaction is (6R)-5,10-methenyltetrahydrofolate + H2O = (6R)-10-formyltetrahydrofolate + H(+). It functions in the pathway one-carbon metabolism; tetrahydrofolate interconversion. Its function is as follows. Catalyzes the oxidation of 5,10-methylenetetrahydrofolate to 5,10-methenyltetrahydrofolate and then the hydrolysis of 5,10-methenyltetrahydrofolate to 10-formyltetrahydrofolate. The polypeptide is Bifunctional protein FolD (Paraburkholderia phytofirmans (strain DSM 17436 / LMG 22146 / PsJN) (Burkholderia phytofirmans)).